The sequence spans 467 residues: Cysteine--tRNA ligase (467 aa).

C27 provides a ligand contact to Zn(2+). Positions 29–39 match the 'HIGH' region motif; the sequence is ATVQGLPHIGH. 3 residues coordinate Zn(2+): C209, H234, and E238. Positions 265-269 match the 'KMSKS' region motif; that stretch reads KMSKS. Residue K268 coordinates ATP.

Belongs to the class-I aminoacyl-tRNA synthetase family. Monomer. Zn(2+) serves as cofactor.

The protein localises to the cytoplasm. The enzyme catalyses tRNA(Cys) + L-cysteine + ATP = L-cysteinyl-tRNA(Cys) + AMP + diphosphate. The chain is Cysteine--tRNA ligase from Mycolicibacterium gilvum (strain PYR-GCK) (Mycobacterium gilvum (strain PYR-GCK)).